Reading from the N-terminus, the 309-residue chain is UDP-N-acetylenolpyruvoylglucosamine reductase (309 aa).

Residues 40 to 204 (LGGKVPLFAI…LQATFKLKKG (165 aa)) enclose the FAD-binding PCMH-type domain. Arg-182 is a catalytic residue. Ser-233 acts as the Proton donor in catalysis. Residue Glu-304 is part of the active site.

The protein belongs to the MurB family. It depends on FAD as a cofactor.

It localises to the cytoplasm. It carries out the reaction UDP-N-acetyl-alpha-D-muramate + NADP(+) = UDP-N-acetyl-3-O-(1-carboxyvinyl)-alpha-D-glucosamine + NADPH + H(+). It participates in cell wall biogenesis; peptidoglycan biosynthesis. Functionally, cell wall formation. This chain is UDP-N-acetylenolpyruvoylglucosamine reductase, found in Fervidobacterium nodosum (strain ATCC 35602 / DSM 5306 / Rt17-B1).